The chain runs to 346 residues: Holliday junction branch migration complex subunit RuvB (346 aa).

Residues 1 to 183 (MTEQRIIASS…FGIVQRLEFY (183 aa)) form a large ATPase domain (RuvB-L) region. ATP is bound by residues isoleucine 22, arginine 23, glycine 64, lysine 67, threonine 68, threonine 69, 130 to 132 (EDF), arginine 173, tyrosine 183, and arginine 220. Threonine 68 is a Mg(2+) binding site. Residues 184-254 (SPQELTRIVI…VAQAAMQMLK (71 aa)) are small ATPAse domain (RuvB-S). Positions 257-346 (PEGFDELDRR…PGIGEPGDLF (90 aa)) are head domain (RuvB-H). DNA is bound by residues arginine 293, arginine 312, and arginine 317.

The protein belongs to the RuvB family. Homohexamer. Forms an RuvA(8)-RuvB(12)-Holliday junction (HJ) complex. HJ DNA is sandwiched between 2 RuvA tetramers; dsDNA enters through RuvA and exits via RuvB. An RuvB hexamer assembles on each DNA strand where it exits the tetramer. Each RuvB hexamer is contacted by two RuvA subunits (via domain III) on 2 adjacent RuvB subunits; this complex drives branch migration. In the full resolvosome a probable DNA-RuvA(4)-RuvB(12)-RuvC(2) complex forms which resolves the HJ.

It localises to the cytoplasm. The catalysed reaction is ATP + H2O = ADP + phosphate + H(+). Functionally, the RuvA-RuvB-RuvC complex processes Holliday junction (HJ) DNA during genetic recombination and DNA repair, while the RuvA-RuvB complex plays an important role in the rescue of blocked DNA replication forks via replication fork reversal (RFR). RuvA specifically binds to HJ cruciform DNA, conferring on it an open structure. The RuvB hexamer acts as an ATP-dependent pump, pulling dsDNA into and through the RuvAB complex. RuvB forms 2 homohexamers on either side of HJ DNA bound by 1 or 2 RuvA tetramers; 4 subunits per hexamer contact DNA at a time. Coordinated motions by a converter formed by DNA-disengaged RuvB subunits stimulates ATP hydrolysis and nucleotide exchange. Immobilization of the converter enables RuvB to convert the ATP-contained energy into a lever motion, pulling 2 nucleotides of DNA out of the RuvA tetramer per ATP hydrolyzed, thus driving DNA branch migration. The RuvB motors rotate together with the DNA substrate, which together with the progressing nucleotide cycle form the mechanistic basis for DNA recombination by continuous HJ branch migration. Branch migration allows RuvC to scan DNA until it finds its consensus sequence, where it cleaves and resolves cruciform DNA. This chain is Holliday junction branch migration complex subunit RuvB, found in Xanthomonas axonopodis pv. citri (strain 306).